Consider the following 235-residue polypeptide: Ribitol-5-phosphate cytidylyltransferase (235 aa).

CTP contacts are provided by residues 7-10 (LAGG), 82-88 (GADRNTS), and serine 113.

Belongs to the IspD/TarI cytidylyltransferase family. TarI subfamily.

It catalyses the reaction D-ribitol 5-phosphate + CTP + H(+) = CDP-L-ribitol + diphosphate. The protein operates within cell wall biogenesis; poly(ribitol phosphate) teichoic acid biosynthesis. In terms of biological role, catalyzes the transfer of the cytidylyl group of CTP to D-ribitol 5-phosphate. The chain is Ribitol-5-phosphate cytidylyltransferase from Streptococcus pneumoniae (strain ATCC 700669 / Spain 23F-1).